The sequence spans 151 residues: MKTDRHKKILEVIDRYEVGTQEELAKILNDEGYNVTQATVSRDIRELNLSKVSVDGKRTRYATLTKDKPVASDKFLTVLKEGFVSMDMAQNILVIKTAPGMAMAVCAAIDALEWNEIVGSIAGDDTIMCAVRTVNDTLLVMNKIKKLIKNN.

This sequence belongs to the ArgR family.

The protein localises to the cytoplasm. The protein operates within amino-acid biosynthesis; L-arginine biosynthesis [regulation]. Its function is as follows. Regulates arginine biosynthesis genes. This Lachnospira eligens (strain ATCC 27750 / DSM 3376 / VPI C15-48 / C15-B4) (Eubacterium eligens) protein is Arginine repressor.